We begin with the raw amino-acid sequence, 135 residues long: MKRLGVFLILASIVCGVVAICGCTGGGGTDYSSSTASAETETCPVQILEHHLVRKDYGTVYVEGVAQNVGNKRLKFVEIKARFYDADGVLIDEFMDVHRDVDPGQKFRFKIIGPIGEEGKKVAKYDIAVGTWWTE.

Residues Leu-4 to Thr-24 form a helical membrane-spanning segment.

Its subcellular location is the membrane. This is an uncharacterized protein from Methanocaldococcus jannaschii (strain ATCC 43067 / DSM 2661 / JAL-1 / JCM 10045 / NBRC 100440) (Methanococcus jannaschii).